A 2238-amino-acid chain; its full sequence is Protein Ycf2 (2238 aa).

Position 1579–1586 (1579–1586 (GSIGTGRS)) interacts with ATP.

It belongs to the Ycf2 family.

The protein localises to the plastid. Its function is as follows. Probable ATPase of unknown function. Its presence in a non-photosynthetic plant (Epifagus virginiana) and experiments in tobacco indicate that it has an essential function which is probably not related to photosynthesis. The chain is Protein Ycf2 from Cuscuta exaltata (Tall dodder).